Consider the following 377-residue polypeptide: Molybdenum import ATP-binding protein ModC (377 aa).

The ABC transporter domain occupies 17 to 254 (ITGDEAIRAR…LDLPFAHDED (238 aa)). Residue 52–59 (GHSGSGKT) participates in ATP binding. The 65-residue stretch at 313–377 (DSSILNVLPA…AQVKGVALLR (65 aa)) folds into the Mop domain.

The protein belongs to the ABC transporter superfamily. Molybdate importer (TC 3.A.1.8) family. As to quaternary structure, the complex is composed of two ATP-binding proteins (ModC), two transmembrane proteins (ModB) and a solute-binding protein (ModA).

The protein localises to the cell inner membrane. It catalyses the reaction molybdate(out) + ATP + H2O = molybdate(in) + ADP + phosphate + H(+). In terms of biological role, part of the ABC transporter complex ModABC involved in molybdenum import. Responsible for energy coupling to the transport system. This is Molybdenum import ATP-binding protein ModC from Aromatoleum aromaticum (strain DSM 19018 / LMG 30748 / EbN1) (Azoarcus sp. (strain EbN1)).